The sequence spans 209 residues: NADH-quinone oxidoreductase subunit C (209 aa).

This sequence belongs to the complex I 30 kDa subunit family. NDH-1 is composed of 14 different subunits. Subunits NuoB, C, D, E, F, and G constitute the peripheral sector of the complex.

The protein resides in the cell inner membrane. The enzyme catalyses a quinone + NADH + 5 H(+)(in) = a quinol + NAD(+) + 4 H(+)(out). Its function is as follows. NDH-1 shuttles electrons from NADH, via FMN and iron-sulfur (Fe-S) centers, to quinones in the respiratory chain. The immediate electron acceptor for the enzyme in this species is believed to be ubiquinone. Couples the redox reaction to proton translocation (for every two electrons transferred, four hydrogen ions are translocated across the cytoplasmic membrane), and thus conserves the redox energy in a proton gradient. In Bordetella petrii (strain ATCC BAA-461 / DSM 12804 / CCUG 43448), this protein is NADH-quinone oxidoreductase subunit C.